A 309-amino-acid polypeptide reads, in one-letter code: 4-hydroxy-3-methylbut-2-enyl diphosphate reductase (309 aa).

Cys-13 is a [4Fe-4S] cluster binding site. Residues His-42 and His-75 each contribute to the (2E)-4-hydroxy-3-methylbut-2-enyl diphosphate site. The dimethylallyl diphosphate site is built by His-42 and His-75. 2 residues coordinate isopentenyl diphosphate: His-42 and His-75. [4Fe-4S] cluster is bound at residue Cys-97. His-125 is a (2E)-4-hydroxy-3-methylbut-2-enyl diphosphate binding site. Dimethylallyl diphosphate is bound at residue His-125. Residue His-125 coordinates isopentenyl diphosphate. The active-site Proton donor is the Glu-127. Thr-165 contributes to the (2E)-4-hydroxy-3-methylbut-2-enyl diphosphate binding site. Cys-195 contributes to the [4Fe-4S] cluster binding site. 4 residues coordinate (2E)-4-hydroxy-3-methylbut-2-enyl diphosphate: Ser-223, Ser-224, Asn-225, and Ser-267. Dimethylallyl diphosphate-binding residues include Ser-223, Ser-224, Asn-225, and Ser-267. 4 residues coordinate isopentenyl diphosphate: Ser-223, Ser-224, Asn-225, and Ser-267.

This sequence belongs to the IspH family. [4Fe-4S] cluster is required as a cofactor.

The enzyme catalyses isopentenyl diphosphate + 2 oxidized [2Fe-2S]-[ferredoxin] + H2O = (2E)-4-hydroxy-3-methylbut-2-enyl diphosphate + 2 reduced [2Fe-2S]-[ferredoxin] + 2 H(+). It catalyses the reaction dimethylallyl diphosphate + 2 oxidized [2Fe-2S]-[ferredoxin] + H2O = (2E)-4-hydroxy-3-methylbut-2-enyl diphosphate + 2 reduced [2Fe-2S]-[ferredoxin] + 2 H(+). Its pathway is isoprenoid biosynthesis; dimethylallyl diphosphate biosynthesis; dimethylallyl diphosphate from (2E)-4-hydroxy-3-methylbutenyl diphosphate: step 1/1. The protein operates within isoprenoid biosynthesis; isopentenyl diphosphate biosynthesis via DXP pathway; isopentenyl diphosphate from 1-deoxy-D-xylulose 5-phosphate: step 6/6. Its function is as follows. Catalyzes the conversion of 1-hydroxy-2-methyl-2-(E)-butenyl 4-diphosphate (HMBPP) into a mixture of isopentenyl diphosphate (IPP) and dimethylallyl diphosphate (DMAPP). Acts in the terminal step of the DOXP/MEP pathway for isoprenoid precursor biosynthesis. The chain is 4-hydroxy-3-methylbut-2-enyl diphosphate reductase from Chlamydia abortus (strain DSM 27085 / S26/3) (Chlamydophila abortus).